Here is a 317-residue protein sequence, read N- to C-terminus: uncharacterized protein (317 aa).

The HTH lysR-type domain occupies 1-60 (MKHELSSMKAFVILAESSSFNNAAKLLNITQPALTRRIKKMEEDLHVQLFERTTRKVTLT). The segment at residues 20–40 (FNNAAKLLNITQPALTRRIKK) is a DNA-binding region (H-T-H motif).

It belongs to the LysR transcriptional regulatory family.

This is an uncharacterized protein from Escherichia coli (strain K12).